A 318-amino-acid chain; its full sequence is Cytosolic Fe-S cluster assembly factor Nubp1 homolog (318 aa).

Residues 1 to 15 (MSAPEVENKPADAPE) are compositionally biased toward basic and acidic residues. Residues 1–29 (MSAPEVENKPADAPEHCPGTESENAGKAS) are disordered. 4 residues coordinate [4Fe-4S] cluster: C17, C31, C34, and C40. 70–77 (GKGGVGKS) serves as a coordination point for ATP. C245 and C248 together coordinate [4Fe-4S] cluster.

This sequence belongs to the Mrp/NBP35 ATP-binding proteins family. NUBP1/NBP35 subfamily. In terms of assembly, heterotetramer of 2 Nubp1 and 2 Nubp2 chains. [4Fe-4S] cluster serves as cofactor.

Its subcellular location is the cytoplasm. Its function is as follows. Component of the cytosolic iron-sulfur (Fe/S) protein assembly (CIA) machinery. Required for maturation of extramitochondrial Fe-S proteins. The Nubp1-Nubp2 heterotetramer forms a Fe-S scaffold complex, mediating the de novo assembly of an Fe-S cluster and its transfer to target apoproteins. This chain is Cytosolic Fe-S cluster assembly factor Nubp1 homolog, found in Aedes aegypti (Yellowfever mosquito).